Here is a 332-residue protein sequence, read N- to C-terminus: Glyceraldehyde-3-phosphate dehydrogenase (332 aa).

Residues 11-12 (RI), Asp-34, Arg-78, and Ser-120 contribute to the NAD(+) site. D-glyceraldehyde 3-phosphate-binding positions include 151–153 (SCT), Thr-182, Arg-197, 210–211 (TG), and Arg-233. Cys-152 acts as the Nucleophile in catalysis. NAD(+) is bound at residue Asn-314.

The protein belongs to the glyceraldehyde-3-phosphate dehydrogenase family. In terms of assembly, homotetramer.

The protein localises to the cytoplasm. It catalyses the reaction D-glyceraldehyde 3-phosphate + phosphate + NAD(+) = (2R)-3-phospho-glyceroyl phosphate + NADH + H(+). It participates in carbohydrate degradation; glycolysis; pyruvate from D-glyceraldehyde 3-phosphate: step 1/5. Functionally, catalyzes the oxidative phosphorylation of glyceraldehyde 3-phosphate (G3P) to 1,3-bisphosphoglycerate (BPG) using the cofactor NAD. The first reaction step involves the formation of a hemiacetal intermediate between G3P and a cysteine residue, and this hemiacetal intermediate is then oxidized to a thioester, with concomitant reduction of NAD to NADH. The reduced NADH is then exchanged with the second NAD, and the thioester is attacked by a nucleophilic inorganic phosphate to produce BPG. This is Glyceraldehyde-3-phosphate dehydrogenase (gap) from Kitasatospora aureofaciens (Streptomyces aureofaciens).